The following is a 449-amino-acid chain: MPKAPKTKLHHAPLYKDIAESSESGVLRQKPSKQKKSKESNTGNGFLDAKTSKKILQLAREQKEELDEEENGKPSQISAFISNGHQKDTLENPAIESSYEESEHARNVSDSESITSQEEEEYEELEIDDADRDLFDRFLPTVSGEEGDLTEEKTTSLSDLIMQKINEAEARARGEYIPSAEEEENALPPLPPKVIEVYSKVGVLLSKYRSGKIPKAFKIIPTLSNWEDILYLTRPDMWTPHACYEATRIFISNLKPVQAQHFLTVIILERVRDDIRENKKLNYHLYMALKKALYKPSSWFKGFLFPLVQENCTLREAAIIGSILQKVSVPVLHSAAALLRLTEFDLSGATSVFIRILLDKKYALPYKVLDSLVFYFMRWKSLERPLAVLEHQSMLVFAQRYKFDITPEQKDALLEVVRLKGHYSIGPEIRRELLNSASRGEEIPVEMEY.

The segment covering 1–13 (MPKAPKTKLHHAP) has biased composition (basic residues). The tract at residues 1–125 (MPKAPKTKLH…SQEEEEYEEL (125 aa)) is disordered. At Ser22 the chain carries Phosphoserine. The span at 73 to 84 (KPSQISAFISNG) shows a compositional bias: polar residues. Ser156 carries the post-translational modification Phosphoserine.

The protein belongs to the bystin family.

This is an uncharacterized protein from Schizosaccharomyces pombe (strain 972 / ATCC 24843) (Fission yeast).